The sequence spans 736 residues: Replication restart protein PriA (736 aa).

The Helicase ATP-binding domain occupies 230–396; sequence DFKGNISKEN…KEGRIRTFNF (167 aa). 243–250 lines the ATP pocket; it reads GPTGSGKT. Positions 339 to 342 match the DEAH box motif; that stretch reads DEEH. The Zn(2+) site is built by Cys-452, Cys-455, Cys-461, Cys-464, Cys-479, Cys-482, Cys-492, and Cys-495. The Helicase C-terminal domain occupies 487–643; the sequence is GLVESCPRCG…EELERRKALG (157 aa).

The protein belongs to the helicase family. PriA subfamily. As to quaternary structure, component of the replication restart primosome. The cofactor is Zn(2+).

It catalyses the reaction Couples ATP hydrolysis with the unwinding of duplex DNA by translocating in the 3'-5' direction.. It carries out the reaction ATP + H2O = ADP + phosphate + H(+). Functionally, initiates the restart of stalled replication forks, which reloads the replicative helicase on sites other than the origin of replication. Recognizes and binds to abandoned replication forks and remodels them to uncover a helicase loading site. Promotes assembly of the primosome at these replication forks. This is Replication restart protein PriA from Thermotoga maritima (strain ATCC 43589 / DSM 3109 / JCM 10099 / NBRC 100826 / MSB8).